Here is a 123-residue protein sequence, read N- to C-terminus: Holo-[acyl-carrier-protein] synthase (123 aa).

Positions 8 and 60 each coordinate Mg(2+).

The protein belongs to the P-Pant transferase superfamily. AcpS family. Requires Mg(2+) as cofactor.

The protein resides in the cytoplasm. The enzyme catalyses apo-[ACP] + CoA = holo-[ACP] + adenosine 3',5'-bisphosphate + H(+). Its function is as follows. Transfers the 4'-phosphopantetheine moiety from coenzyme A to a Ser of acyl-carrier-protein. The sequence is that of Holo-[acyl-carrier-protein] synthase from Ehrlichia ruminantium (strain Gardel).